We begin with the raw amino-acid sequence, 714 residues long: Solute carrier family 12 member 8 (714 aa).

6 helical membrane-spanning segments follow: residues 37–60, 72–93, 99–116, 123–142, 154–173, and 185–205; these read VLFG…VLFL, LLGM…LSGI, SSIG…VLGG, GLLY…TGFA, IWAV…GINL, and LLLF…FTHL. Asn221 is a glycosylation site (N-linked (GlcNAc...) asparagine). Transmembrane regions (helical) follow at residues 233–254, 266–289, 309–331, 360–377, and 383–403; these read FFTV…FNMG, LGSL…LGAI, GFLF…LYGA, PVAA…FVFV, and LAPI…YSYF. Disordered stretches follow at residues 471–503 and 530–550; these read KLES…TLQD and GQES…PEGT. Positions 533–548 are enriched in polar residues; that stretch reads SCWNKQTSKSEGTQPE. 2 helical membrane-spanning segments follow: residues 593–616 and 622–643; these read CNPW…QWVY and GVAA…LGSA.

It belongs to the SLC12A transporter family. Ubiquitous with very low level in normal skin.

Its subcellular location is the membrane. Cation/chloride cotransporter that may play a role in the control of keratinocyte proliferation. The sequence is that of Solute carrier family 12 member 8 (SLC12A8) from Homo sapiens (Human).